The sequence spans 495 residues: ATP synthase subunit beta, chloroplastic (495 aa).

172–179 contributes to the ATP binding site; it reads GGAGVGKT.

Belongs to the ATPase alpha/beta chains family. F-type ATPases have 2 components, CF(1) - the catalytic core - and CF(0) - the membrane proton channel. CF(1) has five subunits: alpha(3), beta(3), gamma(1), delta(1), epsilon(1). CF(0) has four main subunits: a(1), b(1), b'(1) and c(9-12).

It is found in the plastid. It localises to the chloroplast thylakoid membrane. It carries out the reaction ATP + H2O + 4 H(+)(in) = ADP + phosphate + 5 H(+)(out). In terms of biological role, produces ATP from ADP in the presence of a proton gradient across the membrane. The catalytic sites are hosted primarily by the beta subunits. The sequence is that of ATP synthase subunit beta, chloroplastic from Beaucarnea recurvata (Elephant-foot tree).